Consider the following 342-residue polypeptide: L-threonine 3-dehydrogenase (342 aa).

A Zn(2+)-binding site is contributed by Cys-38. Residues Thr-40 and His-43 each act as charge relay system in the active site. Zn(2+)-binding residues include His-63, Glu-64, Cys-93, Cys-96, Cys-99, and Cys-107. Residues Ile-175, Asp-195, Arg-200, 262–264 (LGI), and 286–287 (IY) contribute to the NAD(+) site.

It belongs to the zinc-containing alcohol dehydrogenase family. Homotetramer. It depends on Zn(2+) as a cofactor.

The protein resides in the cytoplasm. It catalyses the reaction L-threonine + NAD(+) = (2S)-2-amino-3-oxobutanoate + NADH + H(+). It functions in the pathway amino-acid degradation; L-threonine degradation via oxydo-reductase pathway; glycine from L-threonine: step 1/2. Functionally, catalyzes the NAD(+)-dependent oxidation of L-threonine to 2-amino-3-ketobutyrate. The chain is L-threonine 3-dehydrogenase from Burkholderia ambifaria (strain ATCC BAA-244 / DSM 16087 / CCUG 44356 / LMG 19182 / AMMD) (Burkholderia cepacia (strain AMMD)).